The following is a 144-amino-acid chain: Tryparedoxin (144 aa).

One can recognise a Thioredoxin domain in the interval 2–144 (SGLAKYLPGA…PDGANFPWPN (143 aa)). A disulfide bond links Cys-40 and Cys-43.

This sequence belongs to the thioredoxin family.

Its function is as follows. Acts as a thiol-disulfide oxidoreductase. It is spontaneously reduced by trypanothione. The sequence is that of Tryparedoxin from Trypanosoma brucei brucei.